We begin with the raw amino-acid sequence, 689 residues long: Glycine--tRNA ligase beta subunit (689 aa).

This sequence belongs to the class-II aminoacyl-tRNA synthetase family. Tetramer of two alpha and two beta subunits.

It localises to the cytoplasm. The enzyme catalyses tRNA(Gly) + glycine + ATP = glycyl-tRNA(Gly) + AMP + diphosphate. This chain is Glycine--tRNA ligase beta subunit, found in Glaesserella parasuis serovar 5 (strain SH0165) (Haemophilus parasuis).